We begin with the raw amino-acid sequence, 440 residues long: Mitochondrial translation factor 2 (440 aa).

A mitochondrion-targeting transit peptide spans M1 to Y15.

It localises to the mitochondrion matrix. Functionally, required for the processing and/or for the stability of the CYTB and COX1 intron-containing pre-mRNAs and of the ATP6 transcript. Could be a stem-loop RNA-binding protein that plays a role in determining RNA stability. The protein is Mitochondrial translation factor 2 (MTF2) of Saccharomyces cerevisiae (strain ATCC 204508 / S288c) (Baker's yeast).